The primary structure comprises 1349 residues: Patatin-like phospholipase domain-containing protein 7 (1349 aa).

The Lumenal portion of the chain corresponds to 1–36; the sequence is MQKEEDVCPEAGYCLGTALSSWGLHFMEEHSQSTML. Residues 37–57 traverse the membrane as a helical segment; sequence MGIGIGVLLTLAFVGLAAFFV. Residues 58–1349 lie on the Cytoplasmic side of the membrane; the sequence is YRKVSRFRRA…DQGPRLYRPS (1292 aa). An a nucleoside 3',5'-cyclic phosphate-binding site is contributed by 170 to 297; it reads VLGHFEKPLF…VRVVQIIMVR (128 aa). A disordered region spans residues 340 to 361; the sequence is MSYGPEEQLERSPRLSEFNSSD. Residues Ser341 and Ser377 each carry the phosphoserine modification. Residues 496–599 and 610–715 each bind a nucleoside 3',5'-cyclic phosphate; these read FLHV…VVRR and ALDW…LGEK. Positions 678 to 964 are involved in the binding to lipid droplets; the sequence is VHAVRDSELA…RGCAQVGILR (287 aa). One can recognise a PNPLA domain in the interval 947-1113; the sequence is LVLGGGGARG…INNLPADVAR (167 aa). Residues 951–956 carry the GXGXXG motif; sequence GGGARG. Residues 978–982 carry the GXSXG motif; the sequence is GTSIG. The active-site Nucleophile is Ser980. Catalysis depends on Asp1100, which acts as the Proton acceptor. The short motif at 1100–1102 is the DGA/G element; sequence DGG. The residue at position 1277 (Ser1277) is a Phosphoserine. Residue Thr1281 is modified to Phosphothreonine. The interval 1297–1349 is disordered; it reads DFQSTGIELDSDSECEPSMSQGPHSLTSPKQSQDSFPWLPNQDDQGPRLYRPS. The span at 1314 to 1331 shows a compositional bias: polar residues; sequence SMSQGPHSLTSPKQSQDS.

Belongs to the NTE family. Expressed in the brain, liver, kidney, lung and testis.

The protein localises to the endoplasmic reticulum membrane. The protein resides in the lipid droplet. It carries out the reaction a 1-acyl-sn-glycero-3-phosphocholine + H2O = sn-glycerol 3-phosphocholine + a fatty acid + H(+). The catalysed reaction is 1-(9Z-octadecenoyl)-sn-glycero-3-phosphocholine + H2O = sn-glycerol 3-phosphocholine + (9Z)-octadecenoate + H(+). The enzyme catalyses 1-(9Z-octadecenoyl)-sn-glycero-3-phosphoethanolamine + H2O = sn-glycero-3-phosphoethanolamine + (9Z)-octadecenoate + H(+). It catalyses the reaction 1-(9Z-octadecenoyl)-sn-glycero-3-phospho-L-serine + H2O = sn-glycero-3-phospho-L-serine + (9Z)-octadecenoate + H(+). It carries out the reaction 1-hexadecanoyl-sn-glycero-3-phosphocholine + H2O = sn-glycerol 3-phosphocholine + hexadecanoate + H(+). The catalysed reaction is 1-hexadecanoyl-sn-glycero-3-phosphate + H2O = sn-glycerol 3-phosphate + hexadecanoate + H(+). Its function is as follows. Lysophospholipase which preferentially deacylates unsaturated lysophosphatidylcholine (C18:1), generating glycerophosphocholine. Also can deacylate, to a lesser extent, lysophosphatidylethanolamine (C18:1), lysophosphatidyl-L-serine (C18:1) and lysophosphatidic acid (C16:0). The chain is Patatin-like phospholipase domain-containing protein 7 (Pnpla7) from Rattus norvegicus (Rat).